A 133-amino-acid polypeptide reads, in one-letter code: 6,7-dimethyl-8-ribityllumazine synthase (133 aa).

Residues Phe-11, 43-45 (AYD), and 67-69 (AIV) each bind 5-amino-6-(D-ribitylamino)uracil. 72-73 (DT) contacts (2S)-2-hydroxy-3-oxobutyl phosphate. The active-site Proton donor is the His-75. Position 100 (Phe-100) interacts with 5-amino-6-(D-ribitylamino)uracil. Arg-115 is a (2S)-2-hydroxy-3-oxobutyl phosphate binding site.

This sequence belongs to the DMRL synthase family.

The enzyme catalyses (2S)-2-hydroxy-3-oxobutyl phosphate + 5-amino-6-(D-ribitylamino)uracil = 6,7-dimethyl-8-(1-D-ribityl)lumazine + phosphate + 2 H2O + H(+). It participates in cofactor biosynthesis; riboflavin biosynthesis; riboflavin from 2-hydroxy-3-oxobutyl phosphate and 5-amino-6-(D-ribitylamino)uracil: step 1/2. Its function is as follows. Catalyzes the formation of 6,7-dimethyl-8-ribityllumazine by condensation of 5-amino-6-(D-ribitylamino)uracil with 3,4-dihydroxy-2-butanone 4-phosphate. This is the penultimate step in the biosynthesis of riboflavin. The sequence is that of 6,7-dimethyl-8-ribityllumazine synthase from Halobacterium salinarum (strain ATCC 29341 / DSM 671 / R1).